The following is a 564-amino-acid chain: Arginine--tRNA ligase (564 aa).

The 'HIGH' region signature appears at 136–146 (ANPTGPLHMGN).

Belongs to the class-I aminoacyl-tRNA synthetase family. Monomer.

Its subcellular location is the cytoplasm. It catalyses the reaction tRNA(Arg) + L-arginine + ATP = L-arginyl-tRNA(Arg) + AMP + diphosphate. The polypeptide is Arginine--tRNA ligase (Ruminiclostridium cellulolyticum (strain ATCC 35319 / DSM 5812 / JCM 6584 / H10) (Clostridium cellulolyticum)).